The sequence spans 494 residues: Transcription factor SOX-9 (494 aa).

Disordered regions lie at residues 1–66 (MNLL…ESDE) and 159–275 (ERLR…FRDV). Low complexity predominate over residues 27 to 42 (SDDSAGSPCPSGSGSD). 2 stretches are compositionally biased toward basic and acidic residues: residues 56–66 (GDPDLKKESDE) and 159–174 (ERLR…DYKY). Residues 63–103 (ESDEDKFPVCIREAVSQVLKGYDWTLVPMPVRVNGSSKNKP) form a dimerization (DIM) region. The PQA stretch occupies residues 63–103 (ESDEDKFPVCIREAVSQVLKGYDWTLVPMPVRVNGSSKNKP). Ser-64 is subject to Phosphoserine. The segment at residues 105–173 (VKRPMNAFMV…QHKKDHPDYK (69 aa)) is a DNA-binding region (HMG box). The residue at position 181 (Ser-181) is a Phosphoserine. Residues 211-222 (SPQSSSSISEVH) are compositionally biased toward low complexity. Residues 224–309 (PGEHSGQSQG…LPPNGHPGVP (86 aa)) form a transactivation domain (TAM) region. Short sequence motifs (9aaTAD) lie at residues 277–286 (IGELSSDVIS) and 292–300 (DVNEFDQYL). Residues 326-337 (SSASSPAGAGHA) are compositionally biased toward low complexity. Positions 326-402 (SSASSPAGAG…PQQQQQQQQQ (77 aa)) are disordered. The segment covering 344–353 (PQPPQPPAQP) has biased composition (pro residues). Residues 372-494 (RPHIKTEQLS…QPVYTQLTRP (123 aa)) are transactivation domain (TAC). Residue Lys-376 forms a Glycyl lysine isopeptide (Lys-Gly) (interchain with G-Cter in SUMO) linkage. Polar residues predominate over residues 378-387 (EQLSPSHYSE). A compositionally biased stretch (low complexity) spans 388-402 (QQQHSPQQQQQQQQQ). A 9aaTAD 3 motif is present at residues 445-453 (GGLYSTFTY). The tract at residues 462 to 494 (YTPIADTSGVPSIPQTHSPQHWEQPVYTQLTRP) is disordered. The span at 470 to 494 (GVPSIPQTHSPQHWEQPVYTQLTRP) shows a compositional bias: polar residues.

Interacts with SNAI2; triggers neural crest delamination in a phosphorylation dependent manner. Interacts with UBE2I. In terms of processing, phosphorylated at Ser-181 in the developing neural tube. Phosphorylation at either Ser-64 or Ser-181 is required for sumoylation, but phosphorylation is not dependent on sumoylation. Sumoylation is enhanced by PKA. Phosphorylation is required for interaction with SNAI2 to trigger neural crest delamination and for an efficient trunk neural crest delamination, whereas sumoylation plays a less significant role. Phosphorylation and sumoylation are induced by BMP signaling pathway. Post-translationally, sumoylated at Lys-376; phosphorylation at either Ser-64 or Ser-181 is required for sumoylation. Sumoylation is induced by BMP signaling pathway.

The protein resides in the nucleus. Functionally, transcription factor that plays a key role in chondrocytes differentiation and skeletal development. Specifically binds the 5'-ACAAAG-3' DNA motif present in enhancers and super-enhancers and promotes expression of genes important for chondrogenesis, including COL2A1. Plays a central role in successive steps of chondrocyte differentiation. Absolutely required for precartilaginous condensation, the first step in chondrogenesis during which skeletal progenitors differentiate into prechondrocytes. Together with SOX5 and SOX6, required for overt chondrogenesis when condensed prechondrocytes differentiate into early stage chondrocytes, the second step in chondrogenesis. Later, required to direct hypertrophic maturation and block osteoblast differentiation of growth plate chondrocytes: maintains chondrocyte columnar proliferation, delays prehypertrophy and then prevents osteoblastic differentiation of chondrocytes. Also required for chondrocyte hypertrophy, both indirectly, by keeping the lineage fate of chondrocytes, and directly, by remaining present in upper hypertrophic cells. Low lipid levels are the main nutritional determinant for chondrogenic commitment of skeletal progenitor cells: when lipids levels are low, FOXO transcription factors promote expression of SOX9, which induces chondrogenic commitment and suppresses fatty acid oxidation. In addition to cartilage development, also acts as a regulator of proliferation and differentiation in epithelial stem/progenitor cells. In response to bone morphogenetic protein stimulus, phosphorylation is induced and then sumoylation, allowing cooperation with SNAI2 to trigger neural crest delamination. This chain is Transcription factor SOX-9, found in Gallus gallus (Chicken).